The following is a 540-amino-acid chain: Glucose-6-phosphate isomerase (540 aa).

E350 (proton donor) is an active-site residue. Active-site residues include H381 and K503.

The protein belongs to the GPI family.

Its subcellular location is the cytoplasm. It catalyses the reaction alpha-D-glucose 6-phosphate = beta-D-fructose 6-phosphate. It functions in the pathway carbohydrate biosynthesis; gluconeogenesis. Its pathway is carbohydrate degradation; glycolysis; D-glyceraldehyde 3-phosphate and glycerone phosphate from D-glucose: step 2/4. Its function is as follows. Catalyzes the reversible isomerization of glucose-6-phosphate to fructose-6-phosphate. This is Glucose-6-phosphate isomerase from Burkholderia pseudomallei (strain 1710b).